The chain runs to 721 residues: Polyribonucleotide nucleotidyltransferase (721 aa).

Mg(2+) contacts are provided by Asp495 and Asp501. Positions 562–621 (PRITTIKIRPERIKDIIGPGGKTIKDITARTGTSINIEDDGSVSIASPNQDKVEEAIKMI) constitute a KH domain. The 69-residue stretch at 631 to 699 (GRIYLGTVRK…RSGKIRLSRK (69 aa)) folds into the S1 motif domain. The disordered stretch occupies residues 699–721 (KEALADSAKKSEGTEPPKGEPAK).

The protein belongs to the polyribonucleotide nucleotidyltransferase family. The cofactor is Mg(2+).

It localises to the cytoplasm. The enzyme catalyses RNA(n+1) + phosphate = RNA(n) + a ribonucleoside 5'-diphosphate. In terms of biological role, involved in mRNA degradation. Catalyzes the phosphorolysis of single-stranded polyribonucleotides processively in the 3'- to 5'-direction. The chain is Polyribonucleotide nucleotidyltransferase from Anaeromyxobacter sp. (strain K).